The chain runs to 937 residues: DNA mismatch repair protein msh-2 (937 aa).

Residue 659 to 666 (GPNMGGKS) participates in ATP binding.

Belongs to the DNA mismatch repair MutS family. As to quaternary structure, heterodimer of msh2 and msh6.

The protein resides in the nucleus. Its function is as follows. Involved in post-replicative DNA-mismatch repair. Binds to mismatch-containing DNA. This is DNA mismatch repair protein msh-2 (msh-2) from Neurospora crassa (strain ATCC 24698 / 74-OR23-1A / CBS 708.71 / DSM 1257 / FGSC 987).